The sequence spans 153 residues: Endoribonuclease YbeY (153 aa).

Residues H114, H118, and H124 each coordinate Zn(2+).

Belongs to the endoribonuclease YbeY family. Zn(2+) is required as a cofactor.

It localises to the cytoplasm. In terms of biological role, single strand-specific metallo-endoribonuclease involved in late-stage 70S ribosome quality control and in maturation of the 3' terminus of the 16S rRNA. This Shewanella denitrificans (strain OS217 / ATCC BAA-1090 / DSM 15013) protein is Endoribonuclease YbeY.